Here is a 202-residue protein sequence, read N- to C-terminus: Na(+)-translocating NADH-quinone reductase subunit E (202 aa).

6 consecutive transmembrane segments (helical) span residues 11-31 (SIFIENLALAFFLGMCTYLAV), 39-59 (MGLGVAVIVVMTITVPVNNLL), 79-99 (LTFVGLISYIGVIAAIVQILE), 114-134 (GIFLPLITVNCAILGASLFMV), 144-164 (VTFGFGSGVGWALAIVLLAGI), and 180-200 (LGITFIVVGLMSFGFLSFSGI).

The protein belongs to the NqrDE/RnfAE family. Composed of six subunits; NqrA, NqrB, NqrC, NqrD, NqrE and NqrF.

The protein resides in the cell inner membrane. It carries out the reaction a ubiquinone + n Na(+)(in) + NADH + H(+) = a ubiquinol + n Na(+)(out) + NAD(+). NQR complex catalyzes the reduction of ubiquinone-1 to ubiquinol by two successive reactions, coupled with the transport of Na(+) ions from the cytoplasm to the periplasm. NqrA to NqrE are probably involved in the second step, the conversion of ubisemiquinone to ubiquinol. In Maridesulfovibrio salexigens (strain ATCC 14822 / DSM 2638 / NCIMB 8403 / VKM B-1763) (Desulfovibrio salexigens), this protein is Na(+)-translocating NADH-quinone reductase subunit E.